The following is a 163-amino-acid chain: tRNA-acetylating toxin 2 (163 aa).

Y137 is an active-site residue.

It belongs to the acetyltransferase family. GNAT subfamily. Homodimer. Forms a complex with cognate antitoxin TacA2.

The enzyme catalyses glycyl-tRNA(Gly) + acetyl-CoA = N-acetylglycyl-tRNA(Gly) + CoA + H(+). It catalyses the reaction L-isoleucyl-tRNA(Ile) + acetyl-CoA = N-acetyl-L-isoleucyl-tRNA(Ile) + CoA + H(+). The catalysed reaction is L-leucyl-tRNA(Leu) + acetyl-CoA = N-acetyl-L-leucyl-tRNA(Leu) + CoA + H(+). Toxic component of a type II toxin-antitoxin (TA) system. Acetylates tRNA and inhibits translation. Acetylates mainly Gly and Ile/Leu in vitro. Overexpression during the lag phase of a tacA2-tacT2 deletion strain leads to a 100-fold increase in persister cells in the presence of cefotaxime and a non-growth state in the absence of antibiotic. This protein, which has a single amino acid compared to S.typhimurium strain 14028s (Lys-29 is Glu in 14028s), produces 100-fold more persister cells, has much higher acetylation activity and binds tRNA much better. Persister cell formation and the growth defect are neutralized by cognate antitoxin TacA2. Its function is as follows. The TacA2-TacT2 complex both represses and derepresses expression of its own operon. The chain is tRNA-acetylating toxin 2 from Salmonella enteritidis.